We begin with the raw amino-acid sequence, 230 residues long: Orotidine 5'-phosphate decarboxylase (230 aa).

Substrate is bound by residues D10, K31, 58-67 (DLKLHDIPNT), T117, R179, Q188, G208, and R209. Residue K60 is the Proton donor of the active site. Residues 177-196 (GIRPKDASSDDQKRITTPED) form a disordered region. Residues 179 to 196 (RPKDASSDDQKRITTPED) are compositionally biased toward basic and acidic residues.

The protein belongs to the OMP decarboxylase family. Type 1 subfamily. In terms of assembly, homodimer.

It carries out the reaction orotidine 5'-phosphate + H(+) = UMP + CO2. It functions in the pathway pyrimidine metabolism; UMP biosynthesis via de novo pathway; UMP from orotate: step 2/2. Functionally, catalyzes the decarboxylation of orotidine 5'-monophosphate (OMP) to uridine 5'-monophosphate (UMP). In Staphylococcus saprophyticus subsp. saprophyticus (strain ATCC 15305 / DSM 20229 / NCIMB 8711 / NCTC 7292 / S-41), this protein is Orotidine 5'-phosphate decarboxylase.